We begin with the raw amino-acid sequence, 313 residues long: GMP synthase [glutamine-hydrolyzing] subunit B (313 aa).

The GMPS ATP-PPase domain maps to 6–190; sequence KVWEKFIEEK…LGLPEKIYNR (185 aa). 33 to 39 lines the ATP pocket; sequence SGGVDSS.

In terms of assembly, heterodimer composed of a glutamine amidotransferase subunit (A) and a GMP-binding subunit (B).

It carries out the reaction XMP + L-glutamine + ATP + H2O = GMP + L-glutamate + AMP + diphosphate + 2 H(+). It participates in purine metabolism; GMP biosynthesis; GMP from XMP (L-Gln route): step 1/1. Its function is as follows. Catalyzes the synthesis of GMP from XMP. The chain is GMP synthase [glutamine-hydrolyzing] subunit B (guaAB) from Pyrococcus furiosus (strain ATCC 43587 / DSM 3638 / JCM 8422 / Vc1).